Consider the following 556-residue polypeptide: Arginine--tRNA ligase (556 aa).

The short motif at 132–142 (ANPTGDLHLGH) is the 'HIGH' region element.

It belongs to the class-I aminoacyl-tRNA synthetase family. Monomer.

It localises to the cytoplasm. The catalysed reaction is tRNA(Arg) + L-arginine + ATP = L-arginyl-tRNA(Arg) + AMP + diphosphate. This is Arginine--tRNA ligase from Bacillus cereus (strain ATCC 14579 / DSM 31 / CCUG 7414 / JCM 2152 / NBRC 15305 / NCIMB 9373 / NCTC 2599 / NRRL B-3711).